A 289-amino-acid chain; its full sequence is Cell division protein ZipA (289 aa).

A topological domain (periplasmic) is located at residue Met1. Residues 2–22 (EIGLREWLIVIGIIVIAGILF) traverse the membrane as a helical segment. Residues 23–289 (DGWRRMRGSK…ERRALTQRRG (267 aa)) lie on the Cytoplasmic side of the membrane. A disordered region spans residues 48-141 (DEEETTSAEV…KPAQRITEDK (94 aa)). Composition is skewed to basic and acidic residues over residues 64–77 (LDTHKEPQLDEHDL), 85–106 (REGKRSNSDKRGNSDKKRKDEP), and 123–141 (GRDDDFPDDKPAQRITEDK).

It belongs to the ZipA family. Interacts with FtsZ via their C-terminal domains.

The protein localises to the cell inner membrane. Its function is as follows. Essential cell division protein that stabilizes the FtsZ protofilaments by cross-linking them and that serves as a cytoplasmic membrane anchor for the Z ring. Also required for the recruitment to the septal ring of downstream cell division proteins. This Pseudomonas savastanoi pv. phaseolicola (strain 1448A / Race 6) (Pseudomonas syringae pv. phaseolicola (strain 1448A / Race 6)) protein is Cell division protein ZipA.